The primary structure comprises 396 residues: Probable sugar efflux transporter (396 aa).

The Cytoplasmic segment spans residues 1 to 14; sequence MTINPVSRKVAWLR. Residues 15-35 form a helical membrane-spanning segment; it reads VVTLAIAAFIFNTTEFVPVGL. Topologically, residues 36–49 are periplasmic; sequence LSDIAESFHMQTAQ. The chain crosses the membrane as a helical span at residues 50-70; it reads VGIMLTIYAWVVAVMSLPFML. Residues 71–80 lie on the Cytoplasmic side of the membrane; it reads LTSQMERRKL. The helical transmembrane segment at 81 to 101 threads the bilayer; the sequence is LIYLFVLFIASHVLSFLAWNF. Residue Thr-102 is a topological domain, periplasmic. The helical transmembrane segment at 103 to 123 threads the bilayer; that stretch reads VLVISRIGIAFAHAIFWSITA. The Cytoplasmic segment spans residues 124 to 135; it reads SLAIRLAPAGKR. The helical transmembrane segment at 136–156 threads the bilayer; that stretch reads AQALSLIATGTALAMVLGLPI. The Periplasmic segment spans residues 157–168; it reads GRVVGQYFGWRT. A helical membrane pass occupies residues 169 to 189; the sequence is TFFAIGMGALITLLCLIKLLP. The Cytoplasmic segment spans residues 190 to 208; that stretch reads KLPSEHSGSLKSLPLLFRR. Residues 209-229 traverse the membrane as a helical segment; sequence PALMSLYVLTVVVVTAHYTAY. Over 230–245 the chain is Periplasmic; that stretch reads SYIEPFVQNVAGLSAN. Residues 246–266 traverse the membrane as a helical segment; sequence FATVLLLILGGAGIIGSLVFG. Residues 267-274 are Cytoplasmic-facing; sequence KLGNRHAS. The chain crosses the membrane as a helical span at residues 275–295; sequence SLVSIAIALLVVCLLLLLPAA. The Periplasmic portion of the chain corresponds to 296-300; that stretch reads ESEAH. The helical transmembrane segment at 301 to 321 threads the bilayer; the sequence is LAILSIFWGIAIMVIGLGMQV. Residues 322–332 lie on the Cytoplasmic side of the membrane; it reads KVLALAPDATD. The helical transmembrane segment at 333–353 threads the bilayer; it reads VAMALFSGIFNIGIGAGALVG. The Periplasmic portion of the chain corresponds to 354-363; the sequence is NQVSLHWSMS. The chain crosses the membrane as a helical span at residues 364-384; the sequence is AIGYIGAIPACAALVWAVLIF. Over 385 to 396 the chain is Cytoplasmic; it reads RKWPVTLEEQPH.

It belongs to the major facilitator superfamily. SotB (TC 2.A.1.2) family.

The protein resides in the cell inner membrane. Its function is as follows. Involved in the efflux of sugars. The physiological role may be the reduction of the intracellular concentration of toxic sugars or sugar metabolites. The chain is Probable sugar efflux transporter from Salmonella typhimurium (strain LT2 / SGSC1412 / ATCC 700720).